The following is a 673-amino-acid chain: Bifunctional polymyxin resistance protein ArnA (673 aa).

The formyltransferase ArnAFT stretch occupies residues M1 to L311. The active-site Proton donor; for formyltransferase activity is the H104. Residues R114 and V136 to D140 contribute to the (6R)-10-formyltetrahydrofolate site. The dehydrogenase ArnADH stretch occupies residues R321–G673. NAD(+) is bound by residues D354 and D375–I376. Residues A400, Y405, and T439 to S440 contribute to the UDP-alpha-D-glucuronate site. The active-site Proton acceptor; for decarboxylase activity is E441. Residues R467, N499, K533–R542, and Y620 contribute to the UDP-alpha-D-glucuronate site. The Proton donor; for decarboxylase activity role is filled by R626.

It in the N-terminal section; belongs to the Fmt family. UDP-L-Ara4N formyltransferase subfamily. This sequence in the C-terminal section; belongs to the NAD(P)-dependent epimerase/dehydratase family. UDP-glucuronic acid decarboxylase subfamily. In terms of assembly, homohexamer, formed by a dimer of trimers.

It catalyses the reaction UDP-alpha-D-glucuronate + NAD(+) = UDP-beta-L-threo-pentopyranos-4-ulose + CO2 + NADH. The enzyme catalyses UDP-4-amino-4-deoxy-beta-L-arabinose + (6R)-10-formyltetrahydrofolate = UDP-4-deoxy-4-formamido-beta-L-arabinose + (6S)-5,6,7,8-tetrahydrofolate + H(+). It functions in the pathway nucleotide-sugar biosynthesis; UDP-4-deoxy-4-formamido-beta-L-arabinose biosynthesis; UDP-4-deoxy-4-formamido-beta-L-arabinose from UDP-alpha-D-glucuronate: step 1/3. Its pathway is nucleotide-sugar biosynthesis; UDP-4-deoxy-4-formamido-beta-L-arabinose biosynthesis; UDP-4-deoxy-4-formamido-beta-L-arabinose from UDP-alpha-D-glucuronate: step 3/3. The protein operates within bacterial outer membrane biogenesis; lipopolysaccharide biosynthesis. Functionally, bifunctional enzyme that catalyzes the oxidative decarboxylation of UDP-glucuronic acid (UDP-GlcUA) to UDP-4-keto-arabinose (UDP-Ara4O) and the addition of a formyl group to UDP-4-amino-4-deoxy-L-arabinose (UDP-L-Ara4N) to form UDP-L-4-formamido-arabinose (UDP-L-Ara4FN). The modified arabinose is attached to lipid A and is required for resistance to polymyxin and cationic antimicrobial peptides. The chain is Bifunctional polymyxin resistance protein ArnA from Pectobacterium atrosepticum (strain SCRI 1043 / ATCC BAA-672) (Erwinia carotovora subsp. atroseptica).